A 92-amino-acid polypeptide reads, in one-letter code: PqqA binding protein (92 aa).

The protein belongs to the PqqD family. As to quaternary structure, monomer. Interacts with PqqE.

The protein operates within cofactor biosynthesis; pyrroloquinoline quinone biosynthesis. Functionally, functions as a PqqA binding protein and presents PqqA to PqqE, in the pyrroloquinoline quinone (PQQ) biosynthetic pathway. This Xanthomonas oryzae pv. oryzae (strain PXO99A) protein is PqqA binding protein.